Consider the following 198-residue polypeptide: ATP-dependent Clp protease proteolytic subunit (198 aa).

Residue Ser98 is the Nucleophile of the active site. The active site involves His123.

This sequence belongs to the peptidase S14 family. Fourteen ClpP subunits assemble into 2 heptameric rings which stack back to back to give a disk-like structure with a central cavity, resembling the structure of eukaryotic proteasomes.

It is found in the cytoplasm. It carries out the reaction Hydrolysis of proteins to small peptides in the presence of ATP and magnesium. alpha-casein is the usual test substrate. In the absence of ATP, only oligopeptides shorter than five residues are hydrolyzed (such as succinyl-Leu-Tyr-|-NHMec, and Leu-Tyr-Leu-|-Tyr-Trp, in which cleavage of the -Tyr-|-Leu- and -Tyr-|-Trp bonds also occurs).. Functionally, cleaves peptides in various proteins in a process that requires ATP hydrolysis. Has a chymotrypsin-like activity. Plays a major role in the degradation of misfolded proteins. This is ATP-dependent Clp protease proteolytic subunit from Bacillus velezensis (strain DSM 23117 / BGSC 10A6 / LMG 26770 / FZB42) (Bacillus amyloliquefaciens subsp. plantarum).